The sequence spans 728 residues: Elongation factor 2 (728 aa).

Positions 18–258 (KFIRNIGIVA…MVIRHLPSPI (241 aa)) constitute a tr-type G domain. GTP-binding positions include 27–34 (AHIDHGKT), 93–97 (DTPGH), and 147–150 (NKVD). A Diphthamide modification is found at H594.

The protein belongs to the TRAFAC class translation factor GTPase superfamily. Classic translation factor GTPase family. EF-G/EF-2 subfamily.

Its subcellular location is the cytoplasm. In terms of biological role, catalyzes the GTP-dependent ribosomal translocation step during translation elongation. During this step, the ribosome changes from the pre-translocational (PRE) to the post-translocational (POST) state as the newly formed A-site-bound peptidyl-tRNA and P-site-bound deacylated tRNA move to the P and E sites, respectively. Catalyzes the coordinated movement of the two tRNA molecules, the mRNA and conformational changes in the ribosome. The polypeptide is Elongation factor 2 (fusA) (Archaeoglobus fulgidus (strain ATCC 49558 / DSM 4304 / JCM 9628 / NBRC 100126 / VC-16)).